Reading from the N-terminus, the 368-residue chain is Phospho-N-acetylmuramoyl-pentapeptide-transferase (368 aa).

Helical transmembrane passes span 32 to 52 (TGGAMVTGALFVFLFGPWIID), 79 to 99 (TPTMGGLMILSGLVVSTVLWA), 102 to 122 (LNPYVWIVLAVTLGFGFIGFY), 140 to 160 (TRLLLELLIALAACYALIRLG), 176 to 196 (VVVDLGWFFLAFGAFIIVGAG), 207 to 227 (GLAIVPVMIAAASFGMIAYLA), 247 to 267 (LAVLCGAVLGAGLGFLWFNAP), 271 to 291 (IFMGDTGSLALGGMLGSIAVA), 296 to 316 (IVLAVIGGLFVLEAVSVIVQV), and 345 to 365 (QIVIRFWIISVMLALAGLSTL).

Belongs to the glycosyltransferase 4 family. MraY subfamily. Requires Mg(2+) as cofactor.

Its subcellular location is the cell inner membrane. It carries out the reaction UDP-N-acetyl-alpha-D-muramoyl-L-alanyl-gamma-D-glutamyl-meso-2,6-diaminopimeloyl-D-alanyl-D-alanine + di-trans,octa-cis-undecaprenyl phosphate = di-trans,octa-cis-undecaprenyl diphospho-N-acetyl-alpha-D-muramoyl-L-alanyl-D-glutamyl-meso-2,6-diaminopimeloyl-D-alanyl-D-alanine + UMP. It functions in the pathway cell wall biogenesis; peptidoglycan biosynthesis. Functionally, catalyzes the initial step of the lipid cycle reactions in the biosynthesis of the cell wall peptidoglycan: transfers peptidoglycan precursor phospho-MurNAc-pentapeptide from UDP-MurNAc-pentapeptide onto the lipid carrier undecaprenyl phosphate, yielding undecaprenyl-pyrophosphoryl-MurNAc-pentapeptide, known as lipid I. In Nitrobacter hamburgensis (strain DSM 10229 / NCIMB 13809 / X14), this protein is Phospho-N-acetylmuramoyl-pentapeptide-transferase.